The primary structure comprises 471 residues: BRISC complex subunit FAM175B (471 aa).

Residues 7-161 form the MPN domain; sequence LVTISGAALS…THKFRHVFLR (155 aa). The stretch at 245–272 forms a coiled coil; sequence ESDLEVAELEKQVHELKIKIATQQLAKR. The disordered stretch occupies residues 343-445; that stretch reads AEKSRRAGRS…FSDAECPISS (103 aa). Residues 359 to 370 are compositionally biased toward low complexity; it reads NQQQETQNFFTN.

Belongs to the FAM175 family. Abro1 subfamily. Component of the BRISC complex, at least composed of FAM175B/ABRO1, BRCC3/BRCC36, BABAM2 and BABAM1/NBA1. Within the complex, interacts directly with BRCC3/BRCC36. The heterodimer with BRCC3/BRCC36 assembles into a heterotetramer. The BRISC complex binds polyubiquitin.

The protein localises to the cytoplasm. It localises to the nucleus. It is found in the cytoskeleton. Its subcellular location is the spindle pole. Functionally, component of the BRISC complex that specifically cleaves 'Lys-63'-linked polyubiquitin, leaving the last ubiquitin chain attached to its substrates. Does not have activity by itself, but the catalytic subunit BRCC3/BRCC36 needs to be associated into a heterotetramer with FAM175B for minimal in vitro activity. May act as a central scaffold protein that assembles the various components of the BRISC complex and retains them in the cytoplasm. Plays a role in regulating the onset of apoptosis via its role in modulating 'Lys-63'-linked ubiquitination of target proteins. Required for normal mitotic spindle assembly and microtubule attachment to kinetochores via its role in deubiquitinating numa1. This chain is BRISC complex subunit FAM175B, found in Camponotus floridanus (Florida carpenter ant).